The sequence spans 159 residues: Large ribosomal subunit protein uL10 (159 aa).

It belongs to the universal ribosomal protein uL10 family. Part of the ribosomal stalk of the 50S ribosomal subunit. The N-terminus interacts with L11 and the large rRNA to form the base of the stalk. The C-terminus forms an elongated spine to which L12 dimers bind in a sequential fashion forming a multimeric L10(L12)X complex.

Functionally, forms part of the ribosomal stalk, playing a central role in the interaction of the ribosome with GTP-bound translation factors. This chain is Large ribosomal subunit protein uL10, found in Campylobacter lari (strain RM2100 / D67 / ATCC BAA-1060).